The following is a 338-amino-acid chain: tRNA N6-adenosine threonylcarbamoyltransferase (338 aa).

2 residues coordinate Fe cation: H111 and H115. Substrate contacts are provided by residues 134 to 138 (LVSGG), D167, G180, and N272. Position 300 (D300) interacts with Fe cation.

The protein belongs to the KAE1 / TsaD family. Requires Fe(2+) as cofactor.

The protein resides in the cytoplasm. The enzyme catalyses L-threonylcarbamoyladenylate + adenosine(37) in tRNA = N(6)-L-threonylcarbamoyladenosine(37) in tRNA + AMP + H(+). Functionally, required for the formation of a threonylcarbamoyl group on adenosine at position 37 (t(6)A37) in tRNAs that read codons beginning with adenine. Is involved in the transfer of the threonylcarbamoyl moiety of threonylcarbamoyl-AMP (TC-AMP) to the N6 group of A37, together with TsaE and TsaB. TsaD likely plays a direct catalytic role in this reaction. This is tRNA N6-adenosine threonylcarbamoyltransferase from Nitrosomonas eutropha (strain DSM 101675 / C91 / Nm57).